A 126-amino-acid polypeptide reads, in one-letter code: Profilin-1 (126 aa).

The protein belongs to the profilin family. As to quaternary structure, occurs in many kinds of cells as a complex with monomeric actin in a 1:1 ratio.

The protein resides in the cytoplasm. The protein localises to the cytoskeleton. Its function is as follows. Binds to actin and affects the structure of the cytoskeleton. At high concentrations, profilin prevents the polymerization of actin, whereas it enhances it at low concentrations. By binding to PIP2, it inhibits the formation of IP3 and DG. This Dictyostelium discoideum (Social amoeba) protein is Profilin-1 (proA).